Consider the following 306-residue polypeptide: Probable cobalamin biosynthesis protein CobD (306 aa).

6 helical membrane passes run I17 to F37, L54 to I74, I88 to S108, I155 to F175, I207 to Y227, and S286 to M306.

Belongs to the CobD/CbiB family.

It localises to the cell membrane. Its pathway is cofactor biosynthesis; adenosylcobalamin biosynthesis. Functionally, converts cobyric acid to cobinamide by the addition of aminopropanol on the F carboxylic group. This Methanococcus maripaludis (strain C5 / ATCC BAA-1333) protein is Probable cobalamin biosynthesis protein CobD.